We begin with the raw amino-acid sequence, 218 residues long: Cell division protein SepF (218 aa).

The tract at residues Asp-25 to Gln-115 is disordered. Positions Ser-29 to Ala-43 are enriched in polar residues. Over residues Pro-47–Arg-63 the composition is skewed to basic and acidic residues.

Belongs to the SepF family. As to quaternary structure, homodimer. Interacts with FtsZ.

It localises to the cytoplasm. Cell division protein that is part of the divisome complex and is recruited early to the Z-ring. Probably stimulates Z-ring formation, perhaps through the cross-linking of FtsZ protofilaments. Its function overlaps with FtsA. The protein is Cell division protein SepF of Streptococcus pyogenes serotype M12 (strain MGAS2096).